We begin with the raw amino-acid sequence, 741 residues long: Aspartyl/asparaginyl beta-hydroxylase (741 aa).

The tract at residues 1–54 (MAPRKNAKGGGGNSSSSGSGSGSGSGSPSTGSSGSSSSPGARREAKHGGHKNGR) is disordered. Residues 1-62 (MAPRKNAKGG…GRRGGISGGS (62 aa)) lie on the Cytoplasmic side of the membrane. Gly residues predominate over residues 8–25 (KGGGGNSSSSGSGSGSGS). Serine 15 bears the Phosphoserine mark. Residues 26–40 (GSPSTGSSGSSSSPG) are compositionally biased toward low complexity. The chain crosses the membrane as a helical; Signal-anchor for type II membrane protein span at residues 63-83 (FFTWFMVIALLGVWTSVAVVW). Over 84–741 (FDLVDYEEVL…PQQRRSLPAI (658 aa)) the chain is Lumenal. Ca(2+) contacts are provided by aspartate 100, aspartate 102, aspartate 104, aspartate 106, and aspartate 111. 2 disordered regions span residues 120–141 (ERSPSERTFPPEEEAETHAELE) and 222–244 (TASQNHPNDMEEMTNEQENSDPS). The segment covering 231–242 (MEEMTNEQENSD) has biased composition (acidic residues). TPR repeat units lie at residues 324–357 (IKAELDAAEKLRKRGKIEEAVNAFEELVRKYPQS), 365–398 (AQCEDDLAEKQRSNEVLRRAIETYQEAADLPDAP), 437–470 (TTLKNDLGVGYLLLGDNDSAKKVYEEVLNVTPND), 472–504 (FAKVHYGFILKAQNKISESIPYLKEGIESGDPG), and 508–540 (GRFYFHLGDAMQRVGNKEAYKWYELGHKRGHFA). Asparagine 453 carries an N-linked (GlcNAc...) asparagine glycan. Residue tryptophan 608 participates in 2-oxoglutarate binding. An intrachain disulfide couples cysteine 624 to cysteine 631. A 2-oxoglutarate-binding site is contributed by serine 651. Histidine 662 provides a ligand contact to Fe cation. A 2-oxoglutarate-binding site is contributed by 671–673 (RMH). The N-linked (GlcNAc...) asparagine glycan is linked to asparagine 689. Histidine 708 contacts Fe cation. Arginine 718 is a 2-oxoglutarate binding site.

It belongs to the aspartyl/asparaginyl beta-hydroxylase family. In terms of assembly, monomer. Isoform 2 interacts with CASQ2. Fe cation serves as cofactor. In terms of tissue distribution, isoform 1 is detected in heart, liver and ovary (at protein level). Detected in heart ventricle. Isoform 1 is widely expressed. Isoform 2 is detected in heart and skeletal muscle.

The protein localises to the endoplasmic reticulum membrane. It localises to the sarcoplasmic reticulum membrane. It catalyses the reaction L-aspartyl-[protein] + 2-oxoglutarate + O2 = 3-hydroxy-L-aspartyl-[protein] + succinate + CO2. Its function is as follows. Specifically hydroxylates an Asp or Asn residue in certain epidermal growth factor-like (EGF) domains of a number of proteins. In Mus musculus (Mouse), this protein is Aspartyl/asparaginyl beta-hydroxylase (Asph).